A 152-amino-acid polypeptide reads, in one-letter code: Gene 57 protein (152 aa).

The Toprim domain occupies 57–137; that stretch reads RDMAITEGEI…IPMPEGEDVN (81 aa).

This chain is Gene 57 protein (57), found in Mycobacterium (Mycobacteriophage D29).